The following is a 95-amino-acid chain: Co-chaperonin GroES (95 aa).

This sequence belongs to the GroES chaperonin family. Heptamer of 7 subunits arranged in a ring. Interacts with the chaperonin GroEL.

The protein resides in the cytoplasm. Functionally, together with the chaperonin GroEL, plays an essential role in assisting protein folding. The GroEL-GroES system forms a nano-cage that allows encapsulation of the non-native substrate proteins and provides a physical environment optimized to promote and accelerate protein folding. GroES binds to the apical surface of the GroEL ring, thereby capping the opening of the GroEL channel. The protein is Co-chaperonin GroES of Staphylococcus haemolyticus (strain JCSC1435).